Consider the following 490-residue polypeptide: Betaine aldehyde dehydrogenase (490 aa).

K(+) contacts are provided by Ser26, Ile27, and Asp93. An NAD(+)-binding site is contributed by 150–152; that stretch reads GAW. Catalysis depends on Lys162, which acts as the Charge relay system. NAD(+)-binding positions include 176–179 and 230–233; these read KPSE and GVET. Leu246 lines the K(+) pocket. The active-site Proton acceptor is Glu252. Positions 254, 286, and 387 each coordinate NAD(+). Residue Cys286 is the Nucleophile of the active site. Residue Cys286 is modified to Cysteine sulfenic acid (-SOH). The K(+) site is built by Lys457 and Gly460. Catalysis depends on Glu464, which acts as the Charge relay system.

It belongs to the aldehyde dehydrogenase family. As to quaternary structure, dimer of dimers. Requires K(+) as cofactor.

It catalyses the reaction betaine aldehyde + NAD(+) + H2O = glycine betaine + NADH + 2 H(+). It participates in amine and polyamine biosynthesis; betaine biosynthesis via choline pathway; betaine from betaine aldehyde: step 1/1. Its function is as follows. Involved in the biosynthesis of the osmoprotectant glycine betaine. Catalyzes the irreversible oxidation of betaine aldehyde to the corresponding acid. The polypeptide is Betaine aldehyde dehydrogenase (Acinetobacter baumannii (strain ACICU)).